The chain runs to 216 residues: Cytochrome c biogenesis ATP-binding export protein CcmA (216 aa).

Residues 11–216 enclose the ABC transporter domain; it reads LSANELTCIR…RKITLDYRFV (206 aa). 43–50 is an ATP binding site; that stretch reads GPNGAGKT.

The protein belongs to the ABC transporter superfamily. CcmA exporter (TC 3.A.1.107) family. As to quaternary structure, the complex is composed of two ATP-binding proteins (CcmA) and two transmembrane proteins (CcmB).

It localises to the cell inner membrane. It carries out the reaction heme b(in) + ATP + H2O = heme b(out) + ADP + phosphate + H(+). Part of the ABC transporter complex CcmAB involved in the biogenesis of c-type cytochromes; once thought to export heme, this seems not to be the case, but its exact role is uncertain. Responsible for energy coupling to the transport system. In Shewanella frigidimarina (strain NCIMB 400), this protein is Cytochrome c biogenesis ATP-binding export protein CcmA.